The chain runs to 348 residues: Fasciculation and elongation protein zeta-2 (348 aa).

The tract at residues 11-40 (YEFQEPAGSVQEQENCNASPEAGAGAHAGG) is disordered. Serine 130, serine 171, and serine 190 each carry phosphoserine. The stretch at 206–280 (ERVKRLSVSE…TAKKKKKLKS (75 aa)) forms a coiled coil. The tract at residues 265 to 296 (QKEHKETAKKKKKLKSGSSQNGRSERSHMPGT) is disordered.

This sequence belongs to the zygin family. As to quaternary structure, homodimer; disulfide-linked. May form heterodimers with FEZ1. Interacts with synaptotagmin.

Functionally, involved in axonal outgrowth and fasciculation. The chain is Fasciculation and elongation protein zeta-2 (Fez2) from Mus musculus (Mouse).